Here is a 284-residue protein sequence, read N- to C-terminus: Phosphatidylserine decarboxylase proenzyme (284 aa).

Residues Asp88, His145, and Ser251 each act as charge relay system; for autoendoproteolytic cleavage activity in the active site. Ser251 functions as the Schiff-base intermediate with substrate; via pyruvic acid; for decarboxylase activity in the catalytic mechanism. A Pyruvic acid (Ser); by autocatalysis modification is found at Ser251.

It belongs to the phosphatidylserine decarboxylase family. PSD-B subfamily. Prokaryotic type I sub-subfamily. Heterodimer of a large membrane-associated beta subunit and a small pyruvoyl-containing alpha subunit. The cofactor is pyruvate. Post-translationally, is synthesized initially as an inactive proenzyme. Formation of the active enzyme involves a self-maturation process in which the active site pyruvoyl group is generated from an internal serine residue via an autocatalytic post-translational modification. Two non-identical subunits are generated from the proenzyme in this reaction, and the pyruvate is formed at the N-terminus of the alpha chain, which is derived from the carboxyl end of the proenzyme. The autoendoproteolytic cleavage occurs by a canonical serine protease mechanism, in which the side chain hydroxyl group of the serine supplies its oxygen atom to form the C-terminus of the beta chain, while the remainder of the serine residue undergoes an oxidative deamination to produce ammonia and the pyruvoyl prosthetic group on the alpha chain. During this reaction, the Ser that is part of the protease active site of the proenzyme becomes the pyruvoyl prosthetic group, which constitutes an essential element of the active site of the mature decarboxylase.

It localises to the cell membrane. It catalyses the reaction a 1,2-diacyl-sn-glycero-3-phospho-L-serine + H(+) = a 1,2-diacyl-sn-glycero-3-phosphoethanolamine + CO2. Its pathway is phospholipid metabolism; phosphatidylethanolamine biosynthesis; phosphatidylethanolamine from CDP-diacylglycerol: step 2/2. Its function is as follows. Catalyzes the formation of phosphatidylethanolamine (PtdEtn) from phosphatidylserine (PtdSer). The polypeptide is Phosphatidylserine decarboxylase proenzyme (Polaromonas sp. (strain JS666 / ATCC BAA-500)).